Reading from the N-terminus, the 726-residue chain is Beta-adducin (726 aa).

The interval 1 to 25 (MSEETVPEAASPPPPQGQPYFDRFS) is disordered. Phosphoserine occurs at positions 11 and 25. The residue at position 55 (Thr55) is a Phosphothreonine; by PKA. A phosphoserine mark is found at Ser60 and Ser344. The segment at 425 to 444 (KQQKEKTRWLNTPNTYLRVN) is interaction with calmodulin. The interval 525–726 (AEKSRSPSTE…KSKKKEKVES (202 aa)) is disordered. Phosphoserine occurs at positions 530 and 532. A Phosphothreonine modification is found at Thr533. Ser535 carries the post-translational modification Phosphoserine. Positions 566-586 (EEYKKEVERKKLELDGEKETA) are enriched in basic and acidic residues. The span at 588–606 (EEPGSPAKSAPASPVQSPA) shows a compositional bias: low complexity. Phosphoserine is present on residues Ser592, Ser596, Ser600, and Ser604. Thr611 is modified (phosphothreonine). Phosphoserine is present on residues Ser613, Ser617, Ser619, and Ser621. Residues 621–631 (SLEEGTKKTET) show a composition bias toward basic and acidic residues. The span at 632–645 (SKAATTEPETTQPE) shows a compositional bias: low complexity. The span at 665–674 (GLSQMTTSAD) shows a compositional bias: polar residues. Thr675 carries the phosphothreonine modification. Ser686, Ser689, Ser693, Ser697, Ser699, and Ser701 each carry phosphoserine. Positions 689–701 (SGPMSPEGSPSKS) are enriched in low complexity. The span at 702 to 726 (PSKKKKKFRTPSFLKKSKKKEKVES) shows a compositional bias: basic residues. Ser703 is modified (phosphoserine; by PKC). The segment at 704 to 721 (KKKKKFRTPSFLKKSKKK) is interaction with calmodulin. At Ser713 the chain carries Phosphoserine; by PKA and PKC.

It belongs to the aldolase class II family. Adducin subfamily. As to quaternary structure, heterodimer of an alpha and a beta subunit. Found in a complex with ADD2, DMTN and SLC2A1. Interacts with SLC2A1. The N-terminus is blocked. As to expression, expressed mainly in brain, spleen, kidney cortex and medulla, and heart. Also expressed in human umbilical vein endothelial cells, human vascular smooth muscle cells, kidney tubular cells and K-562 cell line.

It localises to the cytoplasm. Its subcellular location is the cytoskeleton. The protein resides in the cell membrane. Functionally, membrane-cytoskeleton-associated protein that promotes the assembly of the spectrin-actin network. Binds to the erythrocyte membrane receptor SLC2A1/GLUT1 and may therefore provide a link between the spectrin cytoskeleton to the plasma membrane. Binds to calmodulin. Calmodulin binds preferentially to the beta subunit. The polypeptide is Beta-adducin (ADD2) (Homo sapiens (Human)).